The sequence spans 246 residues: Acetoacetyl-CoA reductase (246 aa).

NADP(+)-binding positions include 12–14 (GGI) and 88–92 (CAGIT). Substrate contacts are provided by residues Asp-94 and 147–150 (QFGQ). Residue Tyr-153 is the Proton acceptor of the active site. An NADP(+)-binding site is contributed by 183–186 (PGYV). A substrate-binding site is contributed by 184 to 185 (GY).

It belongs to the short-chain dehydrogenases/reductases (SDR) family.

It is found in the cytoplasm. The enzyme catalyses a (3R)-3-hydroxyacyl-CoA + NADP(+) = a 3-oxoacyl-CoA + NADPH + H(+). The protein operates within biopolymer metabolism; poly-(R)-3-hydroxybutanoate biosynthesis. This is Acetoacetyl-CoA reductase from Allochromatium vinosum (strain ATCC 17899 / DSM 180 / NBRC 103801 / NCIMB 10441 / D) (Chromatium vinosum).